The sequence spans 275 residues: NH(3)-dependent NAD(+) synthetase (275 aa).

46–53 (GISGGQDS) contacts ATP. Asp-52 is a Mg(2+) binding site. Arg-140 serves as a coordination point for deamido-NAD(+). Position 160 (Thr-160) interacts with ATP. Residue Glu-165 coordinates Mg(2+). Deamido-NAD(+)-binding residues include Lys-173 and Asp-180. 2 residues coordinate ATP: Lys-189 and Thr-211. 260-261 (HK) lines the deamido-NAD(+) pocket.

Belongs to the NAD synthetase family. As to quaternary structure, homodimer.

The enzyme catalyses deamido-NAD(+) + NH4(+) + ATP = AMP + diphosphate + NAD(+) + H(+). Its pathway is cofactor biosynthesis; NAD(+) biosynthesis; NAD(+) from deamido-NAD(+) (ammonia route): step 1/1. Catalyzes the ATP-dependent amidation of deamido-NAD to form NAD. Uses ammonia as a nitrogen source. The polypeptide is NH(3)-dependent NAD(+) synthetase (Escherichia coli (strain K12 / MC4100 / BW2952)).